A 210-amino-acid polypeptide reads, in one-letter code: Thymidylate kinase (210 aa).

ATP is bound at residue 10–17 (GLEGAGKS).

Belongs to the thymidylate kinase family.

The enzyme catalyses dTMP + ATP = dTDP + ADP. Phosphorylation of dTMP to form dTDP in both de novo and salvage pathways of dTTP synthesis. The polypeptide is Thymidylate kinase (Haemophilus influenzae (strain PittEE)).